A 593-amino-acid chain; its full sequence is MVTLYSSPSTHSSGPVASYSNSSIGLYNYHHNKQIAVSSILSRKFGSLQINQKPFWNAVRMQDGAVATPPSKIENETPLKKLKNGILPVAPPKEQKDTIDFDSNKAKSTVSITVVGASGDLAKKKIFPALFALYYEGCLPEHFTIFGYARSKMTDAELRNMVSKTLTCRIDKRENCGEKMEQFLERCFYHSGQYDSLENFAELDKKLKEHEAGRFSNRLFYLSIPPNIFINAVRCASLSASSAHGWTRVIVEKPFGRDSESSAALTRSLKQYLNEDQIFRIDHYLGKELVENLSVLRFSNLIFEPLWSRQCIRNVQFIFSEDFGTEGRGGYFDHYGIIRDIMQNHLLQILALFAMETPVSLDAEDIRNEKVKVLRSMRPLQLDDVIIGQYKCHTKGDVTYPGYTDDKTVPKDSLTPTFAAAALFIDNARWDGVPFLMKAGKALHTRSAEIRVQFRHVPGNLYNKNFGSDLDQATNELVIRVQPNEAIYLKINNKVPGLGMRLDRSNLNLLYSARYSKEIPDAYERLLLDAIEGERRLFIRSDELDAAWSLFTPVLKELEDKKIVPEYYPYGSRGPIGAHYLAARYKVRWGDLV.

NADP(+) contacts are provided by residues 116–123 and Arg-150; that span reads GASGDLAK. Cys-168 and Cys-176 form a disulfide bridge. Lys-253 serves as a coordination point for NADP(+). Residues Lys-253, 283 to 287, Glu-321, and Asp-340 contribute to the D-glucose 6-phosphate site; that span reads HYLGK. The active-site Proton acceptor is the His-345. Lys-438 contributes to the NADP(+) binding site. The D-glucose 6-phosphate site is built by Lys-441 and Arg-446. 2 residues coordinate NADP(+): Arg-451 and Arg-480. Gln-482 contributes to the D-glucose 6-phosphate binding site. Residues 488–490 and Arg-573 contribute to the NADP(+) site; that span reads YLK.

The protein belongs to the glucose-6-phosphate dehydrogenase family. As to quaternary structure, homodimer.

It localises to the plastid. The protein resides in the chloroplast. The enzyme catalyses D-glucose 6-phosphate + NADP(+) = 6-phospho-D-glucono-1,5-lactone + NADPH + H(+). It functions in the pathway carbohydrate degradation; pentose phosphate pathway; D-ribulose 5-phosphate from D-glucose 6-phosphate (oxidative stage): step 1/3. With respect to regulation, regulated by metabolites. Post-translationally inactivated by cysteine-mediated redox modification via the ferredoxin-thioredoxin system in the light and this avoids futile cycles with photosynthetic CO2 fixation. In terms of biological role, catalyzes the rate-limiting step of the oxidative pentose-phosphate pathway, which represents a route for the dissimilation of carbohydrates besides glycolysis. The main function of this enzyme is to provide reducing power (NADPH) and pentose phosphates for fatty acid and nucleic acid synthesis which are involved in membrane synthesis and cell division. The chain is Glucose-6-phosphate 1-dehydrogenase, chloroplastic from Nicotiana tabacum (Common tobacco).